We begin with the raw amino-acid sequence, 439 residues long: Methylenetetrahydrofolate--tRNA-(uracil-5-)-methyltransferase TrmFO (439 aa).

Residue 8–13 coordinates FAD; it reads GAGLAG.

It belongs to the MnmG family. TrmFO subfamily. FAD is required as a cofactor.

The protein localises to the cytoplasm. The enzyme catalyses uridine(54) in tRNA + (6R)-5,10-methylene-5,6,7,8-tetrahydrofolate + NADH + H(+) = 5-methyluridine(54) in tRNA + (6S)-5,6,7,8-tetrahydrofolate + NAD(+). It catalyses the reaction uridine(54) in tRNA + (6R)-5,10-methylene-5,6,7,8-tetrahydrofolate + NADPH + H(+) = 5-methyluridine(54) in tRNA + (6S)-5,6,7,8-tetrahydrofolate + NADP(+). Functionally, catalyzes the folate-dependent formation of 5-methyl-uridine at position 54 (M-5-U54) in all tRNAs. The polypeptide is Methylenetetrahydrofolate--tRNA-(uracil-5-)-methyltransferase TrmFO (Magnetococcus marinus (strain ATCC BAA-1437 / JCM 17883 / MC-1)).